A 225-amino-acid polypeptide reads, in one-letter code: MQRKIKSYVLRAGRISNRQQQGLDLWLEDYELKFDSPSPWNFAKEFGRHDADTIVEIGFGMGTSLFAMAMNNPQCNYLGIEVHKAGVGSLVADLHEYQISNVRVVAHDAVEVLQTKIPENSLAGVQIFFPDPWHKKRHHKRRLIQSEFIQMLVKKIRPSGFIHCATDWEDYAEHILNVLSSESALFNQQKEGGYSPRPDSRPLTKFELRGERLGHGVWDLVFIKK.

S-adenosyl-L-methionine is bound by residues Glu56, Glu81, Asp108, and Asp131. Residue Asp131 is part of the active site. Residues Lys135, Asp167, and 204 to 207 (TKFE) contribute to the substrate site.

Belongs to the class I-like SAM-binding methyltransferase superfamily. TrmB family.

It carries out the reaction guanosine(46) in tRNA + S-adenosyl-L-methionine = N(7)-methylguanosine(46) in tRNA + S-adenosyl-L-homocysteine. Its pathway is tRNA modification; N(7)-methylguanine-tRNA biosynthesis. Catalyzes the formation of N(7)-methylguanine at position 46 (m7G46) in tRNA. The protein is tRNA (guanine-N(7)-)-methyltransferase of Legionella pneumophila (strain Lens).